Here is a 745-residue protein sequence, read N- to C-terminus: MERVWEAYGLTEEEYRKILKTLKREPNHVELGVLGALWSEHCSYKSSKKHLKKFPTKAEWVVQGPGENAGVVKIDEKVWVAFKVESHNHPSYIEPFHGAATGVGGIIRDVLSMGARPIALADSLRFGEFNYHETKRLVKGVVSGISFYGNCIGVPTVAGETVFEPSYKTNPLVNAFCLGVIPAGRMYRARATREGQLLFLIGSSTGRDGIFGAVMASGEFSEDVEEKRPNVQIGDPYFGKKLVEAIMEIVEKDLIVGMQDLGAAGLAGSASEIAAKSEKGVELYLENVPLREKDMNPYEILLSESQERMLLVVEEENVEKVKEIANKWHLEGAVVGKITDDDTFRAYYKGELVAELPVSLIVDEAPVYDRPYKEPEYMKEVRNFNQEELPQTDVKEALKKLLSSPNISCKEWVYTQYDYQVGTNTLLIPGHDAAVLRLKWVLRPELTTEKGIAISSEGNGRMVYLNPYEGGKFVVAEVCRNLACVGAKPLAITDCLNFGNPERPEIMWQFVKAVEGMAEACEELGIPVVSGNVSLYNETVEKNEIRNVFPTPIVVGVGVLEKAEKYTPSKVEKESELYLVGNLEENLRLDGSEYLKVIHGLIKGDVPPVDLEKEKILINLLISFNNKELITCAHDVSVGGLLIALLEMVFRTPYGLEVEVYTDERPDVFFFSENPTRVIIGVESDKAEEVKNAVEKAGLEWMYIGKTTEEKKIKVTFNGDTLLEDELEEYEKLWRTSLEKLLGST.

H41 is a catalytic residue. Residues Y44 and K83 each coordinate ATP. Mg(2+) is bound at residue E85. Substrate-binding positions include 86 to 89 and R108; that span reads SHNH. H87 serves as the catalytic Proton acceptor. D109 contributes to the Mg(2+) binding site. Position 232 (Q232) interacts with substrate. D260 contacts Mg(2+). A substrate-binding site is contributed by 304-306; sequence ESQ. The ATP site is built by D494 and G531. N532 contributes to the Mg(2+) binding site. S534 lines the substrate pocket.

It belongs to the FGAMS family. In terms of assembly, monomer. Part of the FGAM synthase complex composed of 1 PurL, 1 PurQ and 2 PurS subunits.

It localises to the cytoplasm. It carries out the reaction N(2)-formyl-N(1)-(5-phospho-beta-D-ribosyl)glycinamide + L-glutamine + ATP + H2O = 2-formamido-N(1)-(5-O-phospho-beta-D-ribosyl)acetamidine + L-glutamate + ADP + phosphate + H(+). The protein operates within purine metabolism; IMP biosynthesis via de novo pathway; 5-amino-1-(5-phospho-D-ribosyl)imidazole from N(2)-formyl-N(1)-(5-phospho-D-ribosyl)glycinamide: step 1/2. Part of the phosphoribosylformylglycinamidine synthase complex involved in the purines biosynthetic pathway. Catalyzes the ATP-dependent conversion of formylglycinamide ribonucleotide (FGAR) and glutamine to yield formylglycinamidine ribonucleotide (FGAM) and glutamate. The FGAM synthase complex is composed of three subunits. PurQ produces an ammonia molecule by converting glutamine to glutamate. PurL transfers the ammonia molecule to FGAR to form FGAM in an ATP-dependent manner. PurS interacts with PurQ and PurL and is thought to assist in the transfer of the ammonia molecule from PurQ to PurL. The polypeptide is Phosphoribosylformylglycinamidine synthase subunit PurL (Aquifex aeolicus (strain VF5)).